The following is a 373-amino-acid chain: MRKELLKKVKRVVVKIGSGVLTGENGGVDPRFLDGLAAQVAELSGQGTEVVIVSSGAVAAGRQALGLPDRPRTLPQKQAAAAVGQSRLMRAYEEAFSSYDLKVAQILLTRDDLANRRRFQNARGTLDTLLACGIIPVINENDTVVVDELKFGDNDNLSALVTNLVEAQLLLIMTDIDGLYTADPRTDPNATLIHQVGAVTRELERGAGGSGTSVGTGGMATKLAAAKKVVKSGVAAIIFAGRGERTLSRVMKGELLGTLFLPAGESLNRRKHWIAFTIKPAGSIVVDAGARDVLSRHGRSLLPSGIAQVEGRFDRGACVRVLDPEGVEFARGITDYSSQEVEKIRGHQSSEIEGILGFRYGDDVIHRDNLVLL.

Residue Lys15 participates in ATP binding. Ser55, Asp142, and Asn154 together coordinate substrate. ATP contacts are provided by residues 174–175 (TD) and 216–222 (TGGMATK). One can recognise a PUA domain in the interval 281–359 (AGSIVVDAGA…SEIEGILGFR (79 aa)).

This sequence belongs to the glutamate 5-kinase family.

It is found in the cytoplasm. It carries out the reaction L-glutamate + ATP = L-glutamyl 5-phosphate + ADP. It functions in the pathway amino-acid biosynthesis; L-proline biosynthesis; L-glutamate 5-semialdehyde from L-glutamate: step 1/2. Functionally, catalyzes the transfer of a phosphate group to glutamate to form L-glutamate 5-phosphate. The polypeptide is Glutamate 5-kinase (Citrifermentans bemidjiense (strain ATCC BAA-1014 / DSM 16622 / JCM 12645 / Bem) (Geobacter bemidjiensis)).